The primary structure comprises 232 residues: U2 small nuclear ribonucleoprotein B'' (232 aa).

The 80-residue stretch at 10–89 folds into the RRM 1 domain; the sequence is QTVYLRNLNE…KRMRVQYAKT (80 aa). The disordered stretch occupies residues 92 to 159; it reads DCLATEDGST…QEPPAPPNNI (68 aa). Residues 108–123 show a composition bias toward basic and acidic residues; it reads KKQEEKAAEKKRRAEE. Positions 127-151 are enriched in polar residues; sequence SGPNAAAQSNGTGYQASRLGKTSQE. The 75-residue stretch at 158–232 folds into the RRM 2 domain; that stretch reads NILFIQNLPA…NPMAISYAKK (75 aa).

This sequence belongs to the RRM U1 A/B'' family. In terms of assembly, component of the spliceosome where it is associated with snRNP U2.

It localises to the nucleus. The protein localises to the cajal body. The protein resides in the nucleoplasm. It is found in the cytoplasm. Functionally, involved in nuclear pre-mRNA splicing. In Oryza sativa subsp. indica (Rice), this protein is U2 small nuclear ribonucleoprotein B''.